A 257-amino-acid chain; its full sequence is Small ribosomal subunit protein uS3 (257 aa).

Positions 39–112 constitute a KH type-2 domain; sequence IRKFLNKKYN…EIVFNVVEVR (74 aa). Residues 217–257 form a disordered region; that stretch reads HEELRKERQSSASSNHGGGKRRPSRKGPRRSQEDAATEGGN. Positions 234–245 are enriched in basic residues; sequence GGKRRPSRKGPR.

Belongs to the universal ribosomal protein uS3 family. Part of the 30S ribosomal subunit. Forms a tight complex with proteins S10 and S14.

Functionally, binds the lower part of the 30S subunit head. Binds mRNA in the 70S ribosome, positioning it for translation. This chain is Small ribosomal subunit protein uS3, found in Haploplasma axanthum (Acholeplasma axanthum).